Reading from the N-terminus, the 78-residue chain is UPF0349 protein YuzB (78 aa).

This sequence belongs to the UPF0349 family.

The polypeptide is UPF0349 protein YuzB (yuzB) (Bacillus subtilis (strain 168)).